The primary structure comprises 145 residues: Ribosome maturation factor RimP (145 aa).

Belongs to the RimP family.

The protein resides in the cytoplasm. Functionally, required for maturation of 30S ribosomal subunits. This Borreliella afzelii (strain PKo) (Borrelia afzelii) protein is Ribosome maturation factor RimP.